The following is a 714-amino-acid chain: Phosphoribosylformylglycinamidine synthase subunit PurL (714 aa).

Residue H34 is part of the active site. ATP is bound at residue Y37. E78 is a Mg(2+) binding site. Substrate-binding positions include 79 to 82 (SHNH) and R101. H80 acts as the Proton acceptor in catalysis. Position 102 (D102) interacts with Mg(2+). A substrate-binding site is contributed by Q226. D254 serves as a coordination point for Mg(2+). 298-300 (ESQ) contributes to the substrate binding site. The ATP site is built by D474 and G511. N512 contacts Mg(2+). Residue S514 participates in substrate binding.

The protein belongs to the FGAMS family. Monomer. Part of the FGAM synthase complex composed of 1 PurL, 1 PurQ and 2 PurS subunits.

The protein localises to the cytoplasm. The catalysed reaction is N(2)-formyl-N(1)-(5-phospho-beta-D-ribosyl)glycinamide + L-glutamine + ATP + H2O = 2-formamido-N(1)-(5-O-phospho-beta-D-ribosyl)acetamidine + L-glutamate + ADP + phosphate + H(+). Its pathway is purine metabolism; IMP biosynthesis via de novo pathway; 5-amino-1-(5-phospho-D-ribosyl)imidazole from N(2)-formyl-N(1)-(5-phospho-D-ribosyl)glycinamide: step 1/2. Part of the phosphoribosylformylglycinamidine synthase complex involved in the purines biosynthetic pathway. Catalyzes the ATP-dependent conversion of formylglycinamide ribonucleotide (FGAR) and glutamine to yield formylglycinamidine ribonucleotide (FGAM) and glutamate. The FGAM synthase complex is composed of three subunits. PurQ produces an ammonia molecule by converting glutamine to glutamate. PurL transfers the ammonia molecule to FGAR to form FGAM in an ATP-dependent manner. PurS interacts with PurQ and PurL and is thought to assist in the transfer of the ammonia molecule from PurQ to PurL. The sequence is that of Phosphoribosylformylglycinamidine synthase subunit PurL from Methanothermobacter thermautotrophicus (strain ATCC 29096 / DSM 1053 / JCM 10044 / NBRC 100330 / Delta H) (Methanobacterium thermoautotrophicum).